An 822-amino-acid chain; its full sequence is AP-1 complex subunit gamma-1 (822 aa).

Residues 597-628 form a disordered region; that stretch reads EIVQTNGETEPAPLETKPPPSGPQPTSQANDL. Residues 702–817 form the GAE domain; that stretch reads AGIPSITAYS…QDLAEVNNFP (116 aa).

It belongs to the adaptor complexes large subunit family. As to quaternary structure, adaptor protein complex 1 (AP-1) is a heterotetramer composed of two large adaptins (gamma-type subunit AP1G1 and beta-type subunit AP1B1), a medium adaptin (mu-type subunit AP1M1 or AP1M2) and a small adaptin (sigma-type subunit AP1S1 or AP1S2 or AP1S3). Interacts (via GAE domain) with RABEP1. Interacts with SYNRG/gamma-synergin. Interacts with EPS15. Interacts (via GAE domain) with AP1AR (via coiled-coil domain). Interacts with CLN3 (via dileucine motif); this interaction facilitates lysosomal targeting. Interacts (via GAE domain) with AFTPH/aftiphilin; the interaction is required to recruit AFTPH/aftiphilin to the perinuclear region of the cell. Widely expressed.

It localises to the golgi apparatus. Its subcellular location is the cytoplasmic vesicle. The protein localises to the clathrin-coated vesicle membrane. It is found in the cytoplasm. The protein resides in the perinuclear region. It localises to the clathrin-coated vesicle. Its subcellular location is the membrane. The protein localises to the clathrin-coated pit. Subunit of clathrin-associated adaptor protein complex 1 that plays a role in protein sorting in the late-Golgi/trans-Golgi network (TGN) and/or endosomes. The AP complexes mediate both the recruitment of clathrin to membranes and the recognition of sorting signals within the cytosolic tails of transmembrane cargo molecules. In association with AFTPH/aftiphilin in the aftiphilin/p200/gamma-synergin complex, involved in the trafficking of transferrin from early to recycling endosomes, and the membrane trafficking of furin and the lysosomal enzyme cathepsin D between the trans-Golgi network (TGN) and endosomes. The polypeptide is AP-1 complex subunit gamma-1 (AP1G1) (Homo sapiens (Human)).